We begin with the raw amino-acid sequence, 131 residues long: ATP synthase epsilon chain (131 aa).

Belongs to the ATPase epsilon chain family. As to quaternary structure, F-type ATPases have 2 components, CF(1) - the catalytic core - and CF(0) - the membrane proton channel. CF(1) has five subunits: alpha(3), beta(3), gamma(1), delta(1), epsilon(1). CF(0) has three main subunits: a, b and c.

Its subcellular location is the cell inner membrane. Its function is as follows. Produces ATP from ADP in the presence of a proton gradient across the membrane. The protein is ATP synthase epsilon chain of Helicobacter hepaticus (strain ATCC 51449 / 3B1).